The primary structure comprises 355 residues: 3-isopropylmalate dehydrogenase (355 aa).

Arg-90, Arg-100, Arg-128, and Asp-222 together coordinate substrate. Residues Asp-222, Asp-246, and Asp-250 each contribute to the Mg(2+) site. Residue 280-292 (GSAPDIAGKGIAN) coordinates NAD(+).

Belongs to the isocitrate and isopropylmalate dehydrogenases family. LeuB type 1 subfamily. As to quaternary structure, homodimer. It depends on Mg(2+) as a cofactor. The cofactor is Mn(2+).

It localises to the cytoplasm. The enzyme catalyses (2R,3S)-3-isopropylmalate + NAD(+) = 4-methyl-2-oxopentanoate + CO2 + NADH. It functions in the pathway amino-acid biosynthesis; L-leucine biosynthesis; L-leucine from 3-methyl-2-oxobutanoate: step 3/4. In terms of biological role, catalyzes the oxidation of 3-carboxy-2-hydroxy-4-methylpentanoate (3-isopropylmalate) to 3-carboxy-4-methyl-2-oxopentanoate. The product decarboxylates to 4-methyl-2 oxopentanoate. This is 3-isopropylmalate dehydrogenase from Burkholderia lata (strain ATCC 17760 / DSM 23089 / LMG 22485 / NCIMB 9086 / R18194 / 383).